The sequence spans 370 residues: Coproporphyrin III ferrochelatase (370 aa).

2 residues coordinate Fe-coproporphyrin III: Ser-58 and Tyr-127. Fe(2+) contacts are provided by His-189 and Glu-276.

Belongs to the ferrochelatase family.

It is found in the cytoplasm. It catalyses the reaction Fe-coproporphyrin III + 2 H(+) = coproporphyrin III + Fe(2+). The protein operates within porphyrin-containing compound metabolism; protoheme biosynthesis. Its function is as follows. Involved in coproporphyrin-dependent heme b biosynthesis. Catalyzes the insertion of ferrous iron into coproporphyrin III to form Fe-coproporphyrin III. This chain is Coproporphyrin III ferrochelatase, found in Corynebacterium glutamicum (strain R).